A 389-amino-acid polypeptide reads, in one-letter code: Succinate--CoA ligase [ADP-forming] subunit beta (389 aa).

One can recognise an ATP-grasp domain in the interval 9–236; sequence RDLFEKHGVP…KTTADPLEEK (228 aa). ATP is bound by residues lysine 45, 52–54, alanine 94, and glutamate 99; that span reads GRG. Positions 191 and 205 each coordinate Mg(2+). Substrate-binding positions include asparagine 256 and 318 to 320; that span reads GIT.

It belongs to the succinate/malate CoA ligase beta subunit family. In terms of assembly, heterotetramer of two alpha and two beta subunits. Requires Mg(2+) as cofactor.

The catalysed reaction is succinate + ATP + CoA = succinyl-CoA + ADP + phosphate. The enzyme catalyses GTP + succinate + CoA = succinyl-CoA + GDP + phosphate. Its pathway is carbohydrate metabolism; tricarboxylic acid cycle; succinate from succinyl-CoA (ligase route): step 1/1. Functionally, succinyl-CoA synthetase functions in the citric acid cycle (TCA), coupling the hydrolysis of succinyl-CoA to the synthesis of either ATP or GTP and thus represents the only step of substrate-level phosphorylation in the TCA. The beta subunit provides nucleotide specificity of the enzyme and binds the substrate succinate, while the binding sites for coenzyme A and phosphate are found in the alpha subunit. This Kocuria rhizophila (strain ATCC 9341 / DSM 348 / NBRC 103217 / DC2201) protein is Succinate--CoA ligase [ADP-forming] subunit beta.